Consider the following 297-residue polypeptide: 2-dehydropantoate 2-reductase (297 aa).

NADP(+) contacts are provided by residues 11-16, Asn-107, and Ala-133; that span reads GAGAMG. A substrate-binding site is contributed by Asn-107. Lys-187 (proton donor) is an active-site residue. 4 residues coordinate substrate: Asn-191, Asn-195, Asn-205, and Ser-251. Residue Glu-263 coordinates NADP(+).

This sequence belongs to the ketopantoate reductase family.

The protein localises to the cytoplasm. The catalysed reaction is (R)-pantoate + NADP(+) = 2-dehydropantoate + NADPH + H(+). Its pathway is cofactor biosynthesis; (R)-pantothenate biosynthesis; (R)-pantoate from 3-methyl-2-oxobutanoate: step 2/2. In terms of biological role, catalyzes the NADPH-dependent reduction of ketopantoate into pantoic acid. The sequence is that of 2-dehydropantoate 2-reductase from Listeria monocytogenes serovar 1/2a (strain ATCC BAA-679 / EGD-e).